We begin with the raw amino-acid sequence, 148 residues long: 3-hydroxyacyl-[acyl-carrier-protein] dehydratase FabZ (148 aa).

Residue His48 is part of the active site.

The protein belongs to the thioester dehydratase family. FabZ subfamily.

Its subcellular location is the cytoplasm. It catalyses the reaction a (3R)-hydroxyacyl-[ACP] = a (2E)-enoyl-[ACP] + H2O. Involved in unsaturated fatty acids biosynthesis. Catalyzes the dehydration of short chain beta-hydroxyacyl-ACPs and long chain saturated and unsaturated beta-hydroxyacyl-ACPs. The chain is 3-hydroxyacyl-[acyl-carrier-protein] dehydratase FabZ from Campylobacter concisus (strain 13826).